The following is a 270-amino-acid chain: Hematopoietically-expressed homeobox protein HHEX (270 aa).

Residues 1–137 are interaction with SOX13; the sequence is MQYPHPGPAA…PFLQRPLHKR (137 aa). A Phosphoserine modification is found at Ser-53. The homeobox DNA-binding region spans 137-196; that stretch reads RKGGQVRFSNDQTIELEKKFETQKYLSPPERKRLAKMLQLSERQVKTWFQNRRAKWRRLK. The tract at residues 137-270 is required for WNT signaling induction; sequence RKGGQVRFSN…EGDKSYFNAG (134 aa). The disordered stretch occupies residues 194 to 270; sequence RLKQENPQSN…EGDKSYFNAG (77 aa). Positions 222-241 are enriched in polar residues; the sequence is PSEQNKGASLDSSQCSPSPA. A compositionally biased stretch (acidic residues) spans 244–260; it reads EDLESEISEDSDQEVDI.

Interacts with CD81; the interaction prevents nuclear translocation of HHEX. Interacts (via N-terminus) with SOX13; abolishes the SOX13-mediated inhibition of WNT-mediated transcriptional activity via competitive inhibition of the SOX13-TCF7 complex. Interacts with EIF4E; the interaction inhibits EIF4E-mediated mRNA nuclear export. In terms of tissue distribution, liver and promyelocytic leukemia cell line HL-60.

The protein resides in the nucleus. Its subcellular location is the nuclear body. It localises to the cytoplasm. Its function is as follows. Recognizes the DNA sequence 5'-ATTAA-3'. Transcriptional repressor. Activator of WNT-mediated transcription in conjunction with CTNNB1. Establishes anterior identity at two levels; acts early to enhance canonical WNT-signaling by repressing expression of TLE4, and acts later to inhibit NODAL-signaling by directly targeting NODAL. Inhibits EIF4E-mediated mRNA nuclear export. May play a role in hematopoietic differentiation. This is Hematopoietically-expressed homeobox protein HHEX (HHEX) from Homo sapiens (Human).